We begin with the raw amino-acid sequence, 465 residues long: Gamma-aminobutyric acid receptor subunit gamma-1 (465 aa).

Residues 1–20 form the signal peptide; sequence MGSGKAFLFSPSLLWSQTRG. The Extracellular segment spans residues 21–273; sequence VRLIFLLLTL…FDLSRRMGYF (253 aa). N-linked (GlcNAc...) asparagine glycans are attached at residues asparagine 50 and asparagine 127. Residues cysteine 188 and cysteine 202 are joined by a disulfide bond. An N-linked (GlcNAc...) asparagine glycan is attached at asparagine 245. A helical transmembrane segment spans residues 274–294; the sequence is TIQTYIPCILTVVLSWVSFWI. The Cytoplasmic segment spans residues 295–300; the sequence is NKDAVP. A helical transmembrane segment spans residues 301 to 320; that stretch reads ARTSLGITTVLTMTTLSTIA. Topologically, residues 321-328 are extracellular; that stretch reads RKSLPKVS. Residues 329–349 traverse the membrane as a helical segment; the sequence is YVTAMDLFVSVCFIFVFAALM. At 350-444 the chain is on the cytoplasmic side; that stretch reads EYGTLHYFTS…RIAKIDSYSR (95 aa). A helical transmembrane segment spans residues 445-465; sequence IFFPTAFALFNLVYWVGYLYL.

The protein belongs to the ligand-gated ion channel (TC 1.A.9) family. Gamma-aminobutyric acid receptor (TC 1.A.9.5) subfamily. GABRG1 sub-subfamily. In terms of assembly, heteropentamer, formed by a combination of alpha (GABRA1-6), beta (GABRB1-3), gamma (GABRG1-3), delta (GABRD), epsilon (GABRE), rho (GABRR1-3), pi (GABRP) and theta (GABRQ) chains, each subunit exhibiting distinct physiological and pharmacological properties. In terms of processing, may be palmitoylated. Expressed in brain.

The protein localises to the postsynaptic cell membrane. It localises to the cell membrane. It carries out the reaction chloride(in) = chloride(out). Functionally, gamma subunit of the heteropentameric ligand-gated chloride channel gated by gamma-aminobutyric acid (GABA), a major inhibitory neurotransmitter in the brain. GABA-gated chloride channels, also named GABA(A) receptors (GABAAR), consist of five subunits arranged around a central pore and contain GABA active binding site(s) located at the alpha and beta subunit interface(s). When activated by GABA, GABAARs selectively allow the flow of chloride anions across the cell membrane down their electrochemical gradient. Chloride influx into the postsynaptic neuron following GABAAR opening decreases the neuron ability to generate a new action potential, thereby reducing nerve transmission. This Mus musculus (Mouse) protein is Gamma-aminobutyric acid receptor subunit gamma-1.